A 465-amino-acid polypeptide reads, in one-letter code: L-seryl-tRNA(Sec) selenium transferase (465 aa).

Lys-294 carries the post-translational modification N6-(pyridoxal phosphate)lysine.

It belongs to the SelA family. Pyridoxal 5'-phosphate serves as cofactor.

It localises to the cytoplasm. It catalyses the reaction L-seryl-tRNA(Sec) + selenophosphate + H(+) = L-selenocysteinyl-tRNA(Sec) + phosphate. It participates in aminoacyl-tRNA biosynthesis; selenocysteinyl-tRNA(Sec) biosynthesis; selenocysteinyl-tRNA(Sec) from L-seryl-tRNA(Sec) (bacterial route): step 1/1. Its function is as follows. Converts seryl-tRNA(Sec) to selenocysteinyl-tRNA(Sec) required for selenoprotein biosynthesis. In Mannheimia succiniciproducens (strain KCTC 0769BP / MBEL55E), this protein is L-seryl-tRNA(Sec) selenium transferase.